A 382-amino-acid chain; its full sequence is Queuine tRNA-ribosyltransferase (382 aa).

Asp-93 acts as the Proton acceptor in catalysis. Residues Asp-93–Phe-97, Asp-147, Gln-191, and Gly-218 contribute to the substrate site. An RNA binding region spans residues Gly-249–Asp-255. Asp-268 functions as the Nucleophile in the catalytic mechanism. An RNA binding; important for wobble base 34 recognition region spans residues Thr-273 to Arg-277. Residues Cys-306, Cys-308, Cys-311, and His-337 each contribute to the Zn(2+) site.

The protein belongs to the queuine tRNA-ribosyltransferase family. In terms of assembly, homodimer. Within each dimer, one monomer is responsible for RNA recognition and catalysis, while the other monomer binds to the replacement base PreQ1. Zn(2+) is required as a cofactor.

The enzyme catalyses 7-aminomethyl-7-carbaguanine + guanosine(34) in tRNA = 7-aminomethyl-7-carbaguanosine(34) in tRNA + guanine. Its pathway is tRNA modification; tRNA-queuosine biosynthesis. Catalyzes the base-exchange of a guanine (G) residue with the queuine precursor 7-aminomethyl-7-deazaguanine (PreQ1) at position 34 (anticodon wobble position) in tRNAs with GU(N) anticodons (tRNA-Asp, -Asn, -His and -Tyr). Catalysis occurs through a double-displacement mechanism. The nucleophile active site attacks the C1' of nucleotide 34 to detach the guanine base from the RNA, forming a covalent enzyme-RNA intermediate. The proton acceptor active site deprotonates the incoming PreQ1, allowing a nucleophilic attack on the C1' of the ribose to form the product. After dissociation, two additional enzymatic reactions on the tRNA convert PreQ1 to queuine (Q), resulting in the hypermodified nucleoside queuosine (7-(((4,5-cis-dihydroxy-2-cyclopenten-1-yl)amino)methyl)-7-deazaguanosine). This chain is Queuine tRNA-ribosyltransferase, found in Haemophilus influenzae (strain 86-028NP).